The following is a 423-amino-acid chain: UDP-N-acetylglucosamine 1-carboxyvinyltransferase 2 (423 aa).

23–24 is a phosphoenolpyruvate binding site; the sequence is KN. Arginine 93 lines the UDP-N-acetyl-alpha-D-glucosamine pocket. Catalysis depends on cysteine 117, which acts as the Proton donor. Residue cysteine 117 is modified to 2-(S-cysteinyl)pyruvic acid O-phosphothioketal. Residues 122–126, aspartate 305, and isoleucine 327 contribute to the UDP-N-acetyl-alpha-D-glucosamine site; that span reads RPIDQ.

The protein belongs to the EPSP synthase family. MurA subfamily.

It localises to the cytoplasm. It catalyses the reaction phosphoenolpyruvate + UDP-N-acetyl-alpha-D-glucosamine = UDP-N-acetyl-3-O-(1-carboxyvinyl)-alpha-D-glucosamine + phosphate. The protein operates within cell wall biogenesis; peptidoglycan biosynthesis. Functionally, cell wall formation. Adds enolpyruvyl to UDP-N-acetylglucosamine. This Listeria innocua serovar 6a (strain ATCC BAA-680 / CLIP 11262) protein is UDP-N-acetylglucosamine 1-carboxyvinyltransferase 2.